Here is a 276-residue protein sequence, read N- to C-terminus: Small ribosomal subunit protein uS5w (276 aa).

Over residues 1-15 (MAERGVERGGDRGDF) the composition is skewed to basic and acidic residues. A disordered region spans residues 1 to 42 (MAERGVERGGDRGDFGRGFGGRGGGRGGPRGRGRRAGRAPEE). Residues 16-28 (GRGFGGRGGGRGG) show a composition bias toward gly residues. Residues 87–150 (LKDEVMKIMP…ILAKLSVVPI (64 aa)) enclose the S5 DRBM domain.

The protein belongs to the universal ribosomal protein uS5 family.

In Arabidopsis thaliana (Mouse-ear cress), this protein is Small ribosomal subunit protein uS5w (RPS2D).